The sequence spans 216 residues: RNA pyrophosphohydrolase (216 aa).

In terms of domain architecture, Nudix hydrolase spans 6–149 (GFRPNVGIIL…KRDVYQLALT (144 aa)). A Nudix box motif is present at residues 38 to 59 (GGIKYGETPMQAMYRELHEETG).

It belongs to the Nudix hydrolase family. RppH subfamily. A divalent metal cation serves as cofactor.

Its function is as follows. Accelerates the degradation of transcripts by removing pyrophosphate from the 5'-end of triphosphorylated RNA, leading to a more labile monophosphorylated state that can stimulate subsequent ribonuclease cleavage. In Burkholderia ambifaria (strain MC40-6), this protein is RNA pyrophosphohydrolase.